A 224-amino-acid chain; its full sequence is ATP phosphoribosyltransferase (224 aa).

The protein belongs to the ATP phosphoribosyltransferase family. Short subfamily. Heteromultimer composed of HisG and HisZ subunits.

The protein localises to the cytoplasm. The catalysed reaction is 1-(5-phospho-beta-D-ribosyl)-ATP + diphosphate = 5-phospho-alpha-D-ribose 1-diphosphate + ATP. It functions in the pathway amino-acid biosynthesis; L-histidine biosynthesis; L-histidine from 5-phospho-alpha-D-ribose 1-diphosphate: step 1/9. Functionally, catalyzes the condensation of ATP and 5-phosphoribose 1-diphosphate to form N'-(5'-phosphoribosyl)-ATP (PR-ATP). Has a crucial role in the pathway because the rate of histidine biosynthesis seems to be controlled primarily by regulation of HisG enzymatic activity. The sequence is that of ATP phosphoribosyltransferase from Cupriavidus pinatubonensis (strain JMP 134 / LMG 1197) (Cupriavidus necator (strain JMP 134)).